A 1216-amino-acid chain; its full sequence is DNA-directed RNA polymerase subunit beta (1216 aa).

Positions 1185-1216 (EEKQELPSQEYESLNLDQELKTASENVSESEF) are disordered. The span at 1190–1216 (LPSQEYESLNLDQELKTASENVSESEF) shows a compositional bias: polar residues.

This sequence belongs to the RNA polymerase beta chain family. The RNAP catalytic core consists of 2 alpha, 1 beta, 1 beta' and 1 omega subunit. When a sigma factor is associated with the core the holoenzyme is formed, which can initiate transcription.

It catalyses the reaction RNA(n) + a ribonucleoside 5'-triphosphate = RNA(n+1) + diphosphate. DNA-dependent RNA polymerase catalyzes the transcription of DNA into RNA using the four ribonucleoside triphosphates as substrates. This is DNA-directed RNA polymerase subunit beta from Mycoplasmopsis pulmonis (strain UAB CTIP) (Mycoplasma pulmonis).